Consider the following 161-residue polypeptide: Putative acetyltransferase SAV0762 (161 aa).

The protein belongs to the transferase hexapeptide repeat family.

The polypeptide is Putative acetyltransferase SAV0762 (Staphylococcus aureus (strain Mu50 / ATCC 700699)).